The chain runs to 386 residues: Succinate--CoA ligase [ADP-forming] subunit beta (386 aa).

Residues Lys-46, Gly-53–Gly-55, Glu-99, Gln-102, and Glu-107 each bind ATP. Mg(2+) contacts are provided by Asn-199 and Asp-213. Substrate-binding positions include Asn-264 and Gly-321–Val-323.

This sequence belongs to the succinate/malate CoA ligase beta subunit family. Heterotetramer of two alpha and two beta subunits. Mg(2+) is required as a cofactor.

It catalyses the reaction succinate + ATP + CoA = succinyl-CoA + ADP + phosphate. The catalysed reaction is GTP + succinate + CoA = succinyl-CoA + GDP + phosphate. The protein operates within carbohydrate metabolism; tricarboxylic acid cycle; succinate from succinyl-CoA (ligase route): step 1/1. In terms of biological role, succinyl-CoA synthetase functions in the citric acid cycle (TCA), coupling the hydrolysis of succinyl-CoA to the synthesis of either ATP or GTP and thus represents the only step of substrate-level phosphorylation in the TCA. The beta subunit provides nucleotide specificity of the enzyme and binds the substrate succinate, while the binding sites for coenzyme A and phosphate are found in the alpha subunit. In Ruthia magnifica subsp. Calyptogena magnifica, this protein is Succinate--CoA ligase [ADP-forming] subunit beta.